The chain runs to 602 residues: Aspartate--tRNA(Asp/Asn) ligase (602 aa).

An L-aspartate-binding site is contributed by glutamate 176. The aspartate stretch occupies residues glutamine 200–lysine 203. Arginine 222 and histidine 452 together coordinate L-aspartate. Position 222-224 (arginine 222–glutamate 224) interacts with ATP. Glutamate 490 contacts ATP. Arginine 497 is an L-aspartate binding site. Position 542–545 (glycine 542–arginine 545) interacts with ATP.

It belongs to the class-II aminoacyl-tRNA synthetase family. Type 1 subfamily. Homodimer.

It is found in the cytoplasm. It catalyses the reaction tRNA(Asx) + L-aspartate + ATP = L-aspartyl-tRNA(Asx) + AMP + diphosphate. Its function is as follows. Aspartyl-tRNA synthetase with relaxed tRNA specificity since it is able to aspartylate not only its cognate tRNA(Asp) but also tRNA(Asn). Reaction proceeds in two steps: L-aspartate is first activated by ATP to form Asp-AMP and then transferred to the acceptor end of tRNA(Asp/Asn). This Rickettsia canadensis (strain McKiel) protein is Aspartate--tRNA(Asp/Asn) ligase.